The sequence spans 356 residues: Alanine racemase, catabolic (356 aa).

Lys-35 functions as the Proton acceptor; specific for D-alanine in the catalytic mechanism. The residue at position 35 (Lys-35) is an N6-(pyridoxal phosphate)lysine. Arg-130 is a binding site for substrate. Residue Tyr-253 is the Proton acceptor; specific for L-alanine of the active site. Residue Met-301 participates in substrate binding.

It belongs to the alanine racemase family. Pyridoxal 5'-phosphate serves as cofactor.

The catalysed reaction is L-alanine = D-alanine. Its function is as follows. Isomerizes L-alanine to D-alanine which is then oxidized to pyruvate by DadA. This Salmonella typhi protein is Alanine racemase, catabolic (dadX).